Reading from the N-terminus, the 420-residue chain is Threonine aspartase 1 (420 aa).

Positions methionine 1 to valine 25 are disordered. Threonine 234 serves as the catalytic Nucleophile.

Belongs to the Ntn-hydrolase family. In terms of assembly, intramolecular proteolysis generates 2 subunits, alpha and beta, which reassemble through a non-covalent association to form the fully active enzyme.

Its function is as follows. Protease responsible for KMT2A/MLL1 and KMT2D/MLL2 processing and activation. Through substrate activation, it controls the expression of HOXA genes, and the expression of key cell cycle regulators including CCNA1, CCNB1, CCNE1 and CDKN2A. This Mus musculus (Mouse) protein is Threonine aspartase 1 (Tasp1).